A 200-amino-acid polypeptide reads, in one-letter code: Dephospho-CoA kinase (200 aa).

Positions 4–200 constitute a DPCK domain; that stretch reads VIGLTGGIAS…VILKNWNIID (197 aa). Residue 12 to 17 coordinates ATP; that stretch reads ASGKST.

Belongs to the CoaE family.

Its subcellular location is the cytoplasm. It catalyses the reaction 3'-dephospho-CoA + ATP = ADP + CoA + H(+). The protein operates within cofactor biosynthesis; coenzyme A biosynthesis; CoA from (R)-pantothenate: step 5/5. Its function is as follows. Catalyzes the phosphorylation of the 3'-hydroxyl group of dephosphocoenzyme A to form coenzyme A. The polypeptide is Dephospho-CoA kinase (Bacillus cereus (strain ATCC 10987 / NRS 248)).